We begin with the raw amino-acid sequence, 275 residues long: Light-independent protochlorophyllide reductase iron-sulfur ATP-binding protein (275 aa).

ATP is bound by residues 12-17 and K41; that span reads GIGKST. S16 lines the Mg(2+) pocket. 2 residues coordinate [4Fe-4S] cluster: C97 and C131. Residue 182 to 183 participates in ATP binding; it reads NR.

It belongs to the NifH/BchL/ChlL family. Homodimer. Protochlorophyllide reductase is composed of three subunits; BchL, BchN and BchB. Requires [4Fe-4S] cluster as cofactor.

It catalyses the reaction chlorophyllide a + oxidized 2[4Fe-4S]-[ferredoxin] + 2 ADP + 2 phosphate = protochlorophyllide a + reduced 2[4Fe-4S]-[ferredoxin] + 2 ATP + 2 H2O. It participates in porphyrin-containing compound metabolism; bacteriochlorophyll biosynthesis (light-independent). Functionally, component of the dark-operative protochlorophyllide reductase (DPOR) that uses Mg-ATP and reduced ferredoxin to reduce ring D of protochlorophyllide (Pchlide) to form chlorophyllide a (Chlide). This reaction is light-independent. The L component serves as a unique electron donor to the NB-component of the complex, and binds Mg-ATP. This chain is Light-independent protochlorophyllide reductase iron-sulfur ATP-binding protein, found in Chlorobium phaeobacteroides (strain DSM 266 / SMG 266 / 2430).